The primary structure comprises 450 residues: Glucose-6-phosphate isomerase (450 aa).

Glu-289 acts as the Proton donor in catalysis. Active-site residues include His-310 and Lys-424.

It belongs to the GPI family.

Its subcellular location is the cytoplasm. It catalyses the reaction alpha-D-glucose 6-phosphate = beta-D-fructose 6-phosphate. Its pathway is carbohydrate biosynthesis; gluconeogenesis. It participates in carbohydrate degradation; glycolysis; D-glyceraldehyde 3-phosphate and glycerone phosphate from D-glucose: step 2/4. Functionally, catalyzes the reversible isomerization of glucose-6-phosphate to fructose-6-phosphate. In Leptospira biflexa serovar Patoc (strain Patoc 1 / Ames), this protein is Glucose-6-phosphate isomerase.